Reading from the N-terminus, the 162-residue chain is ATP synthase subunit delta, mitochondrial (162 aa).

The N-terminal 25 residues, 1–25 (MSSLRLLASAARRATTHVAYTRRGY), are a transit peptide targeting the mitochondrion.

The protein belongs to the ATPase epsilon chain family. F-type ATPases have 2 components, CF(1) - the catalytic core - and CF(0) - the membrane proton channel. CF(1) has five subunits: alpha(3), beta(3), gamma(1), delta(1), epsilon(1). CF(0) has three main subunits: a, b and c.

The protein resides in the mitochondrion. Its subcellular location is the mitochondrion inner membrane. Mitochondrial membrane ATP synthase (F(1)F(0) ATP synthase or Complex V) produces ATP from ADP in the presence of a proton gradient across the membrane which is generated by electron transport complexes of the respiratory chain. F-type ATPases consist of two structural domains, F(1) - containing the extramembraneous catalytic core, and F(0) - containing the membrane proton channel, linked together by a central stalk and a peripheral stalk. During catalysis, ATP turnover in the catalytic domain of F(1) is coupled via a rotary mechanism of the central stalk subunits to proton translocation. Part of the complex F(1) domain and of the central stalk which is part of the complex rotary element. Rotation of the central stalk against the surrounding alpha(3)beta(3) subunits leads to hydrolysis of ATP in three separate catalytic sites on the beta subunits. In Agaricus bisporus (White button mushroom), this protein is ATP synthase subunit delta, mitochondrial (atpD).